Here is a 288-residue protein sequence, read N- to C-terminus: Lysosomal thioesterase PPT2 homolog (288 aa).

Residues 1 to 22 (MRLRLQVLVALLTCSSISVSLA) form the signal peptide. The active-site Nucleophile is the S98. A glycan (N-linked (GlcNAc...) asparagine) is linked at N192. Catalysis depends on residues D214 and H269.

The protein belongs to the palmitoyl-protein thioesterase family. In terms of tissue distribution, expressed in adult head and crop.

The protein resides in the lysosome. It carries out the reaction hexadecanoyl-CoA + H2O = hexadecanoate + CoA + H(+). It catalyses the reaction S-hexadecanoyl-N-acetylcysteamine + H2O = N-acetylcysteamine + hexadecanoate + H(+). Functionally, catalyzes the cleavage of thioester bonds from S-palmitoyl-CoA or S-palmitoyl-N-acetylcysteamine (unbranched structures) but does not have activity against palmitoylcysteine or palmitoylated proteins, branched structures or bulky head groups. Conversely, hydrolyzes both long and short chain fatty acyl-CoA substrate. This chain is Lysosomal thioesterase PPT2 homolog (Ppt2), found in Drosophila melanogaster (Fruit fly).